The primary structure comprises 233 residues: MPCCDPYPWIGLNVGRLSSFPLLKYPQVRRWLAPFIVACSLYFLLWIPEDQPSWVSALVKCQPILCLVLFLWAVAPGGSYTWLLQGALTCSAVGDACLIWPEAFFYGMAVFSVAHLLYLWAFGLSPLQPGLLLCTTLASLTYYSFLLLHLEPNMVLPVAAYGLILNTMLWRGLVLGRSAGWGAVLFIFSDGVLAWDTFVYTLPFARLVTMSTYYAAQLLLTLSALRSPGLKTH.

The Cytoplasmic segment spans residues 1-30; the sequence is MPCCDPYPWIGLNVGRLSSFPLLKYPQVRR. A helical membrane pass occupies residues 31–47; that stretch reads WLAPFIVACSLYFLLWI. The Extracellular portion of the chain corresponds to 48–53; the sequence is PEDQPS. The helical transmembrane segment at 54-75 threads the bilayer; that stretch reads WVSALVKCQPILCLVLFLWAVA. At 76–81 the chain is on the cytoplasmic side; the sequence is PGGSYT. Residues 82-100 traverse the membrane as a helical segment; sequence WLLQGALTCSAVGDACLIW. The Extracellular segment spans residues 101 to 106; it reads PEAFFY. Residues 107–124 traverse the membrane as a helical segment; sequence GMAVFSVAHLLYLWAFGL. The Cytoplasmic segment spans residues 125 to 130; sequence SPLQPG. The chain crosses the membrane as a helical span at residues 131–147; the sequence is LLLCTTLASLTYYSFLL. Residues 148–153 lie on the Extracellular side of the membrane; sequence LHLEPN. A helical transmembrane segment spans residues 154–170; that stretch reads MVLPVAAYGLILNTMLW. Topologically, residues 171 to 178 are cytoplasmic; sequence RGLVLGRS. Residues 179–195 form a helical membrane-spanning segment; it reads AGWGAVLFIFSDGVLAW. Residues 196 to 206 lie on the Extracellular side of the membrane; it reads DTFVYTLPFAR. A helical membrane pass occupies residues 207 to 225; it reads LVTMSTYYAAQLLLTLSAL. Residues 226-233 are Cytoplasmic-facing; it reads RSPGLKTH.

This sequence belongs to the TMEM86 family. In terms of assembly, homodimer.

The protein localises to the endoplasmic reticulum membrane. It is found in the cytoplasm. It catalyses the reaction a 1-O-(1Z-alkenyl)-sn-glycero-3-phosphocholine + H2O = a 2,3-saturated aldehyde + sn-glycerol 3-phosphocholine. The enzyme catalyses a 1-O-(1Z-alkenyl)-sn-glycero-3-phosphoethanolamine + H2O = a 2,3-saturated aldehyde + sn-glycero-3-phosphoethanolamine. Competitively inhibited by lysophosphatidic acid. Functionally, catalyzes the hydrolysis of the vinyl ether bond of choline or ethanolamine lysoplasmalogens, forming fatty aldehyde and glycerophosphocholine or glycerophosphoethanolamine, respectively and is specific for the sn-2-deacylated (lyso) form of plasmalogen. The protein is Lysoplasmalogenase TMEM86B (Tmem86b) of Rattus norvegicus (Rat).